Consider the following 694-residue polypeptide: Elongation factor G (694 aa).

A tr-type G domain is found at 8-287 (EDYRNFGIMA…AVISYLPSPV (280 aa)). Residues 17–24 (AHIDAGKT), 86–90 (DTPGH), and 140–143 (NKMD) contribute to the GTP site.

It belongs to the TRAFAC class translation factor GTPase superfamily. Classic translation factor GTPase family. EF-G/EF-2 subfamily.

It is found in the cytoplasm. Its function is as follows. Catalyzes the GTP-dependent ribosomal translocation step during translation elongation. During this step, the ribosome changes from the pre-translocational (PRE) to the post-translocational (POST) state as the newly formed A-site-bound peptidyl-tRNA and P-site-bound deacylated tRNA move to the P and E sites, respectively. Catalyzes the coordinated movement of the two tRNA molecules, the mRNA and conformational changes in the ribosome. In Bartonella quintana (strain Toulouse) (Rochalimaea quintana), this protein is Elongation factor G.